Reading from the N-terminus, the 319-residue chain is 12-(S)-hydroxy-5,8,10,14-eicosatetraenoic acid receptor (319 aa).

Residues 1–16 (MERTNCSAASTVVETA) are Extracellular-facing. The N-linked (GlcNAc...) asparagine glycan is linked to Asn-5. A helical transmembrane segment spans residues 17 to 37 (VGTMLTLECVLGLMGNAVALW). Residues 38 to 52 (TFFYRLKVWKPYAVY) lie on the Cytoplasmic side of the membrane. The chain crosses the membrane as a helical span at residues 53–73 (LFNLVVADLLLATSLPFFAAF). The Extracellular segment spans residues 74 to 91 (YLKGKTWKLGHMPCQVLL). A helical membrane pass occupies residues 92–110 (FLLAFSRGVGVAFLTTVAL). The Cytoplasmic segment spans residues 111–131 (DRYLRVVHPRLRVNLLSLRAA). Residues 132–152 (WGISSLIWLLMVVLTPQNLLT) form a helical membrane-spanning segment. At 153–180 (CRTTQNSTECPSFYPTGGAKAIATCQEV) the chain is on the extracellular side. The helical transmembrane segment at 181–201 (LFFLQVLLPFGLISFCNSGLI) threads the bilayer. Over 202-219 (RTLQKRLRESDKQPRIRR) the chain is Cytoplasmic. The helical transmembrane segment at 220–240 (ARVLVAIVLLLFGLCFLPSVL) threads the bilayer. Topologically, residues 241–265 (TRVLVHIFQEFKSCSVQQAIVRASD) are extracellular. A helical membrane pass occupies residues 266 to 284 (IAGSLTCLHSTLSPAIYCF). Topologically, residues 285-319 (SNPAFTHSYRKVLKSLRGRRKAAESPSDNLRDSYS) are cytoplasmic.

Belongs to the G-protein coupled receptor 1 family. In terms of assembly, interacts with KRAS; in a farnesylation-dependent manner.

It localises to the cell membrane. Functionally, high-affinity receptor for 12-(S)-hydroxy-5,8,10,14-eicosatetraenoic acid (12-S-HETE), with much lower affinities for other HETE isomers. 12-S-HETE is a eicosanoid, a 12-lipoxygenase (ALOX12) metabolite of arachidonic acid, involved in many physiologic and pathologic processes, such as cell growth, adhesion, inflammation and cancer promotion. 12-S-HETE-binding leads to activation of ERK1/2 (MAPK3/MAPK1), MEK, and NF-kappa-B pathways and leads to cell growth. Plays a crucial role for proliferation, survival and macropinocytosis of KRAS-dependent cancer cells by mediating the translocation of KRAS from the endoplasmic reticulum to the plasma membrane (PM) and its association with the PM. Contributes to enhanced immune responses by inducing dendrite protrusion of small intestinal CX3CR1(+) phagocytes for the uptake of luminal antigens. Also acts as a key receptor for 12-(S)-HETE-mediated liver ischemia reperfusion injury. Proton-sensing G protein-coupled receptor. The protein is 12-(S)-hydroxy-5,8,10,14-eicosatetraenoic acid receptor (Gpr31) of Mus musculus (Mouse).